Here is a 301-residue protein sequence, read N- to C-terminus: tRNA dimethylallyltransferase 1 (301 aa).

Position 10-17 (10-17) interacts with ATP; sequence GPTASGKT. Substrate is bound at residue 12–17; that stretch reads TASGKT. An interaction with substrate tRNA region spans residues 35–38; that stretch reads DSRQ.

This sequence belongs to the IPP transferase family. In terms of assembly, monomer. The cofactor is Mg(2+).

It carries out the reaction adenosine(37) in tRNA + dimethylallyl diphosphate = N(6)-dimethylallyladenosine(37) in tRNA + diphosphate. Its function is as follows. Catalyzes the transfer of a dimethylallyl group onto the adenine at position 37 in tRNAs that read codons beginning with uridine, leading to the formation of N6-(dimethylallyl)adenosine (i(6)A). This is tRNA dimethylallyltransferase 1 from Geotalea uraniireducens (strain Rf4) (Geobacter uraniireducens).